A 24-amino-acid chain; its full sequence is Ascaphin-7 (24 aa).

In terms of tissue distribution, expressed by the skin glands.

Its subcellular location is the secreted. In terms of biological role, antimicrobial peptide that shows higher potency against Gram-negative bacteria than against Gram-positive bacteria. Has a very week hemolytic activity. The sequence is that of Ascaphin-7 from Ascaphus truei (Coastal tailed frog).